The sequence spans 4538 residues: Polyketide synthase PksL (4538 aa).

Residues Met1–Ile123 form an N-terminal hotdog fold 1 region. The region spanning Met1–Ile285 is the PKS/mFAS DH 1 domain. The Proton acceptor; for dehydratase activity 1 role is filled by His26. Residues Gln138–Ile285 are C-terminal hotdog fold 1. Asp199 serves as the catalytic Proton donor; for dehydratase activity 1. Positions His289–Ser314 are disordered. The Carrier 1 domain occupies Ser320 to Tyr394. The residue at position 354 (Ser354) is an O-(pantetheine 4'-phosphoryl)serine. Residues Ala433–Glu871 form the Ketosynthase family 3 (KS3) 1 domain. Active-site for beta-ketoacyl synthase 1 activity residues include Cys609, His744, and His784. The interval His1048–Val1226 is dehydratase. Residues His1051–Glu1175 are N-terminal hotdog fold 2. The region spanning His1051–Gly1340 is the PKS/mFAS DH 2 domain. His1080 acts as the Proton acceptor; for dehydratase activity 2 in catalysis. A C-terminal hotdog fold 2 region spans residues Asn1189–Gly1340. The Proton donor; for dehydratase activity 2 role is filled by Asp1251. A beta-ketoacyl reductase 1 region spans residues Lys1520–Ala1713. In terms of domain architecture, Carrier 2 spans Glu1800 to Arg1873. Ser1834 is modified (O-(pantetheine 4'-phosphoryl)serine). Residues Thr1926 to Glu2365 enclose the Ketosynthase family 3 (KS3) 2 domain. Residues Cys2103, His2238, and His2278 each act as for beta-ketoacyl synthase 2 activity in the active site. The tract at residues Thr2546 to Gly2568 is disordered. 2 Carrier domains span residues Ile2597–Leu2674 and Val2738–Leu2815. An O-(pantetheine 4'-phosphoryl)serine mark is found at Ser2634 and Ser2775. The segment at Ser2828–His2854 is disordered. The Ketosynthase family 3 (KS3) 3 domain maps to Glu2873 to Glu3294. Catalysis depends on for beta-ketoacyl synthase 3 activity residues Cys3040, His3175, and His3215. Residues Asp3686–Glu3887 form a beta-ketoacyl reductase 2 region. One can recognise a Carrier 5 domain in the interval Asn3960–Tyr4037. The residue at position 3997 (Ser3997) is an O-(pantetheine 4'-phosphoryl)serine. In terms of domain architecture, Ketosynthase family 3 (KS3) 4 spans Ala4082–Gly4485. Cys4237 acts as the For beta-ketoacyl synthase 4 activity in catalysis.

Pantetheine 4'-phosphate serves as cofactor.

It localises to the cytoplasm. It participates in antibiotic biosynthesis; bacillaene biosynthesis. Functionally, involved in some intermediate steps for the synthesis of the antibiotic polyketide bacillaene which is involved in secondary metabolism. The sequence is that of Polyketide synthase PksL (pksL) from Bacillus subtilis (strain 168).